The chain runs to 226 residues: Deoxyribose-phosphate aldolase (226 aa).

The active-site Proton donor/acceptor is Asp84. Lys146 acts as the Schiff-base intermediate with acetaldehyde in catalysis. The active-site Proton donor/acceptor is Lys188.

It belongs to the DeoC/FbaB aldolase family. DeoC type 1 subfamily. As to quaternary structure, homodimer.

It localises to the cytoplasm. It catalyses the reaction 2-deoxy-D-ribose 5-phosphate = D-glyceraldehyde 3-phosphate + acetaldehyde. Its pathway is carbohydrate degradation; 2-deoxy-D-ribose 1-phosphate degradation; D-glyceraldehyde 3-phosphate and acetaldehyde from 2-deoxy-alpha-D-ribose 1-phosphate: step 2/2. Its function is as follows. Catalyzes a reversible aldol reaction between acetaldehyde and D-glyceraldehyde 3-phosphate to generate 2-deoxy-D-ribose 5-phosphate. This chain is Deoxyribose-phosphate aldolase, found in Pyrobaculum aerophilum (strain ATCC 51768 / DSM 7523 / JCM 9630 / CIP 104966 / NBRC 100827 / IM2).